A 359-amino-acid chain; its full sequence is Small ribosomal subunit biogenesis GTPase RsgA (359 aa).

The CP-type G domain occupies 101–259 (KRKGSQAIAS…LMDNPGIREV (159 aa)). GTP is bound by residues 149-152 (NKKD) and 201-209 (GSSGAGKST). Residues cysteine 284, cysteine 289, histidine 291, and cysteine 297 each coordinate Zn(2+). The tract at residues 331–359 (DPEEARKKKQKDKQMSKALQKRLKDKGRK) is disordered. A compositionally biased stretch (basic residues) spans 349-359 (LQKRLKDKGRK).

It belongs to the TRAFAC class YlqF/YawG GTPase family. RsgA subfamily. Monomer. Associates with 30S ribosomal subunit, binds 16S rRNA. Zn(2+) is required as a cofactor.

Its subcellular location is the cytoplasm. In terms of biological role, one of several proteins that assist in the late maturation steps of the functional core of the 30S ribosomal subunit. Helps release RbfA from mature subunits. May play a role in the assembly of ribosomal proteins into the subunit. Circularly permuted GTPase that catalyzes slow GTP hydrolysis, GTPase activity is stimulated by the 30S ribosomal subunit. The sequence is that of Small ribosomal subunit biogenesis GTPase RsgA from Leptospira interrogans serogroup Icterohaemorrhagiae serovar Lai (strain 56601).